The primary structure comprises 259 residues: Putative electron transfer flavoprotein subunit YgcR (259 aa).

The protein belongs to the ETF beta-subunit/FixA family. In terms of assembly, ygcQ and YgcR form a heterodimer.

May play a role in a redox process. This Escherichia coli (strain K12) protein is Putative electron transfer flavoprotein subunit YgcR (ygcR).